Reading from the N-terminus, the 166-residue chain is Lipoprotein signal peptidase (166 aa).

4 consecutive transmembrane segments (helical) span residues 9–29 (ASGA…FDQL), 45–65 (ALTS…FGFL), 71–91 (WQRW…CFLL), and 100–120 (FSVS…DRLV). Residues D126 and D144 contribute to the active site. Residues 135-155 (WHFPAFNLADSAITIGAVLLI) form a helical membrane-spanning segment.

This sequence belongs to the peptidase A8 family.

Its subcellular location is the cell inner membrane. The enzyme catalyses Release of signal peptides from bacterial membrane prolipoproteins. Hydrolyzes -Xaa-Yaa-Zaa-|-(S,diacylglyceryl)Cys-, in which Xaa is hydrophobic (preferably Leu), and Yaa (Ala or Ser) and Zaa (Gly or Ala) have small, neutral side chains.. It participates in protein modification; lipoprotein biosynthesis (signal peptide cleavage). This protein specifically catalyzes the removal of signal peptides from prolipoproteins. The protein is Lipoprotein signal peptidase of Burkholderia cenocepacia (strain ATCC BAA-245 / DSM 16553 / LMG 16656 / NCTC 13227 / J2315 / CF5610) (Burkholderia cepacia (strain J2315)).